A 156-amino-acid polypeptide reads, in one-letter code: SsrA-binding protein (156 aa).

It belongs to the SmpB family.

It is found in the cytoplasm. In terms of biological role, required for rescue of stalled ribosomes mediated by trans-translation. Binds to transfer-messenger RNA (tmRNA), required for stable association of tmRNA with ribosomes. tmRNA and SmpB together mimic tRNA shape, replacing the anticodon stem-loop with SmpB. tmRNA is encoded by the ssrA gene; the 2 termini fold to resemble tRNA(Ala) and it encodes a 'tag peptide', a short internal open reading frame. During trans-translation Ala-aminoacylated tmRNA acts like a tRNA, entering the A-site of stalled ribosomes, displacing the stalled mRNA. The ribosome then switches to translate the ORF on the tmRNA; the nascent peptide is terminated with the 'tag peptide' encoded by the tmRNA and targeted for degradation. The ribosome is freed to recommence translation, which seems to be the essential function of trans-translation. Required for trans-translation. Probably required for sporulation; deletion of the gene for tmRNA impairs sporulation via its effect on trans-translation, and as smpB is required for trans-translation under non-stress conditions, it is also probably required during sporulation. This chain is SsrA-binding protein, found in Bacillus subtilis (strain 168).